The following is a 66-amino-acid chain: MMRKLRVLIPEPKSRFLRVKCPNCGNEQTIFSHATFPVRCLSCGTELVYSMGGKAKIVGEVVRIMG.

Zn(2+) is bound by residues C21, C24, C40, and C43. Residues 21-43 (CPNCGNEQTIFSHATFPVRCLSC) form a C4-type zinc finger.

This sequence belongs to the eukaryotic ribosomal protein eS27 family. As to quaternary structure, part of the 30S ribosomal subunit. The cofactor is Zn(2+).

The sequence is that of Small ribosomal subunit protein eS27 from Saccharolobus solfataricus (strain ATCC 35092 / DSM 1617 / JCM 11322 / P2) (Sulfolobus solfataricus).